The sequence spans 204 residues: Elongation factor Ts (204 aa).

Residues 80–83 (TDFV) are involved in Mg(2+) ion dislocation from EF-Tu.

This sequence belongs to the EF-Ts family.

Its subcellular location is the cytoplasm. Associates with the EF-Tu.GDP complex and induces the exchange of GDP to GTP. It remains bound to the aminoacyl-tRNA.EF-Tu.GTP complex up to the GTP hydrolysis stage on the ribosome. This Caldicellulosiruptor saccharolyticus (strain ATCC 43494 / DSM 8903 / Tp8T 6331) protein is Elongation factor Ts.